The chain runs to 707 residues: DNA topoisomerase 1 (707 aa).

In terms of domain architecture, Toprim spans 1-140; that stretch reads MYAILAEKPS…IKRLWTSSMT (140 aa). Residues 157 to 596 enclose the Topo IA-type catalytic domain; sequence TLPLYYQAKA…HSKKLSSVLF (440 aa). The interval 199-204 is interaction with DNA; sequence SLGRVQ. Y323 serves as the catalytic O-(5'-phospho-DNA)-tyrosine intermediate.

The protein belongs to the type IA topoisomerase family. Monomer.

The catalysed reaction is ATP-independent breakage of single-stranded DNA, followed by passage and rejoining.. In terms of biological role, releases the supercoiling and torsional tension of DNA, which is introduced during the DNA replication and transcription, by transiently cleaving and rejoining one strand of the DNA duplex. Introduces a single-strand break via transesterification at a target site in duplex DNA. The scissile phosphodiester is attacked by the catalytic tyrosine of the enzyme, resulting in the formation of a DNA-(5'-phosphotyrosyl)-enzyme intermediate and the expulsion of a 3'-OH DNA strand. The free DNA strand then undergoes passage around the unbroken strand, thus removing DNA supercoils. Finally, in the religation step, the DNA 3'-OH attacks the covalent intermediate to expel the active-site tyrosine and restore the DNA phosphodiester backbone. This Alkalihalophilus pseudofirmus (strain ATCC BAA-2126 / JCM 17055 / OF4) (Bacillus pseudofirmus) protein is DNA topoisomerase 1 (topA).